The chain runs to 197 residues: Small ribosomal subunit protein uS4B (197 aa).

The region spanning 88 to 150 is the S4 RNA-binding domain; sequence SRLDNMVYRM…SRKTEMFVNN (63 aa).

It belongs to the universal ribosomal protein uS4 family. In terms of assembly, part of the 30S ribosomal subunit. Contacts protein S5. The interaction surface between S4 and S5 is involved in control of translational fidelity.

Functionally, one of the primary rRNA binding proteins, it binds directly to 16S rRNA where it nucleates assembly of the body of the 30S subunit. With S5 and S12 plays an important role in translational accuracy. The polypeptide is Small ribosomal subunit protein uS4B (rpsD2) (Clostridium perfringens (strain 13 / Type A)).